A 375-amino-acid chain; its full sequence is 4-hydroxy-3-methylbut-2-en-1-yl diphosphate synthase (flavodoxin) (375 aa).

Positions 275, 278, 310, and 317 each coordinate [4Fe-4S] cluster.

It belongs to the IspG family. [4Fe-4S] cluster serves as cofactor.

It catalyses the reaction (2E)-4-hydroxy-3-methylbut-2-enyl diphosphate + oxidized [flavodoxin] + H2O + 2 H(+) = 2-C-methyl-D-erythritol 2,4-cyclic diphosphate + reduced [flavodoxin]. The protein operates within isoprenoid biosynthesis; isopentenyl diphosphate biosynthesis via DXP pathway; isopentenyl diphosphate from 1-deoxy-D-xylulose 5-phosphate: step 5/6. Functionally, converts 2C-methyl-D-erythritol 2,4-cyclodiphosphate (ME-2,4cPP) into 1-hydroxy-2-methyl-2-(E)-butenyl 4-diphosphate. The polypeptide is 4-hydroxy-3-methylbut-2-en-1-yl diphosphate synthase (flavodoxin) (Ruegeria pomeroyi (strain ATCC 700808 / DSM 15171 / DSS-3) (Silicibacter pomeroyi)).